The following is a 446-amino-acid chain: Na(+)-translocating NADH-quinone reductase subunit A (446 aa).

It belongs to the NqrA family. Composed of six subunits; NqrA, NqrB, NqrC, NqrD, NqrE and NqrF.

It catalyses the reaction a ubiquinone + n Na(+)(in) + NADH + H(+) = a ubiquinol + n Na(+)(out) + NAD(+). Its function is as follows. NQR complex catalyzes the reduction of ubiquinone-1 to ubiquinol by two successive reactions, coupled with the transport of Na(+) ions from the cytoplasm to the periplasm. NqrA to NqrE are probably involved in the second step, the conversion of ubisemiquinone to ubiquinol. This is Na(+)-translocating NADH-quinone reductase subunit A from Psychromonas ingrahamii (strain DSM 17664 / CCUG 51855 / 37).